Here is a 507-residue protein sequence, read N- to C-terminus: MFS transporter fsa7 (507 aa).

Residues 1–65 (MATKDPAVTT…PDDPEHPLNW (65 aa)) form a disordered region. A glycan (N-linked (GlcNAc...) asparagine) is linked at N64. The helical transmembrane segment at 72–92 (LHLVIVSLFTLAANLAATMFA) threads the bilayer. A glycan (N-linked (GlcNAc...) asparagine) is linked at N106. Transmembrane regions (helical) follow at residues 111 to 131 (AMTVSLYVLGFALGPLLLAPL), 146 to 166 (FVYIAFTIGCAFSTNVAMFLV), 169 to 189 (IICGCAASGPMSIGGGTVADL), 200 to 220 (ALFTVGPLLGPVIGPIIGGFV), and 228 to 248 (WTFRIILIFSGLIGVATVIFM). N252 carries an N-linked (GlcNAc...) asparagine glycan. 6 consecutive transmembrane segments (helical) span residues 302–322 (PIVLLVSLYTGILFGLIFLLF), 341–361 (GLAYLGLGIGMILGLVLFSVL), 379–399 (LILMKWLGPVTPLGLFIYGWT), 406–426 (WIVPIIGTFVVGFGSLFVVIP), 429–449 (IYLVDSFGAEAAASAMAANLL), and 472–492 (GWGNSVLGFICLLFTPVPWFF).

Belongs to the major facilitator superfamily.

The protein resides in the cell membrane. Efflux pump that might be required for efficient secretion of fusarisetin A or other secondary metabolies produced by the fusarisetin A gene cluster. This Fusarium sp. (strain FN080326) protein is MFS transporter fsa7.